Here is a 409-residue protein sequence, read N- to C-terminus: Tryptophan synthase beta chain (409 aa).

Lysine 98 carries the post-translational modification N6-(pyridoxal phosphate)lysine.

The protein belongs to the TrpB family. Tetramer of two alpha and two beta chains. Requires pyridoxal 5'-phosphate as cofactor.

The catalysed reaction is (1S,2R)-1-C-(indol-3-yl)glycerol 3-phosphate + L-serine = D-glyceraldehyde 3-phosphate + L-tryptophan + H2O. It functions in the pathway amino-acid biosynthesis; L-tryptophan biosynthesis; L-tryptophan from chorismate: step 5/5. In terms of biological role, the beta subunit is responsible for the synthesis of L-tryptophan from indole and L-serine. The protein is Tryptophan synthase beta chain of Jannaschia sp. (strain CCS1).